Here is an 883-residue protein sequence, read N- to C-terminus: Ankyrin repeat and SAM domain-containing protein 6 (883 aa).

10 ANK repeats span residues 8–37 (PGLQLLLRACEQGDTDTARRLLEPGADPVA), 68–97 (AGNSALQLAAAGGHEPLVRFLLRRGASVNS), 101–130 (YGWSALMQAARCGHVSVAHLLLDHGADVNA), 134–163 (LGASVLTVASRGGHLGVVKLLLEAGAIVDH), 181–210 (LGITALMAAVQHGHEAVVRLLMEWGADPNH), 215–244 (VGWSPLMLAALLGKLNVAQQLVEKGANPDH), 282–312 (KRRPDIFYALKMGNFQLVKEIADEDPNHVNL), 316–345 (DGATPLMLAAVTGHLPLVQLLVEKHADMDK), 350–379 (HGWTALMQATYHGNKEIVKYLLNQGADVAL), and 383–414 (NGYTAFDLVMLLNDPDTELVRLLASVCMQVNK). A disordered region spans residues 30–50 (EPGADPVAGPEAGAEPAGPEA). Disordered regions lie at residues 414-439 (KDRGRPSHRPPLPHSKARQPWSIPVL), 490-522 (MRAPPQDRTSHLGPPEAAHATKDSGPGNPRREK), 566-773 (SHTC…ITDE), and 852-883 (SFESSASNTRAPGNGPSMAGWTRPEETVSSRR). Over residues 566-576 (SHTCHNGKADP) the composition is skewed to basic and acidic residues. A compositionally biased stretch (low complexity) spans 607-630 (PSISRSPASPASSGSFNHSPHSSG). Residues 631-640 (GASGIGGMSR) are compositionally biased toward gly residues. S649 carries the phosphoserine modification. The span at 649 to 661 (SGGSVDSVLSQIA) shows a compositional bias: polar residues. Low complexity-rich tracts occupy residues 687 to 711 (SSSPPELPASLPSSGSGSSSGPSSS) and 720 to 737 (PPSGTSATSKSTSPTLTP). 2 positions are modified to phosphoserine: S732 and S740. Low complexity predominate over residues 748–768 (SSVSSSSSHRQSKSSGGSSSG). Residues 771–834 (TDEDELTGIL…LAAISELNAG (64 aa)) form the SAM domain. Residues 852 to 862 (SFESSASNTRA) show a composition bias toward polar residues. Basic and acidic residues predominate over residues 874–883 (RPEETVSSRR).

As to quaternary structure, homooligomer. Interacts with NEK8. Central component of a complex containing at least ANKS6, INVS, NEK8 and NPHP3. ANKS6 may organize complex assembly by linking INVS and NPHP3 to NEK8 and INVS may target the complex to the proximal ciliary axoneme. Interacts (via SAM domain) with BICC1 (via KH domains) in an RNA-dependent manner. Interacts (via SAM domain) with ANKS3 (via SAM domain). Hydroxylated at Asn-129, most probably by HIF1AN. This hydroxylation results in decreased NEK8-binding. In terms of tissue distribution, expressed in kidney (at protein level).

It localises to the cell projection. The protein localises to the cilium. The protein resides in the cytoplasm. In terms of biological role, required for renal function. This chain is Ankyrin repeat and SAM domain-containing protein 6 (Anks6), found in Mus musculus (Mouse).